Reading from the N-terminus, the 642-residue chain is tRNA uridine 5-carboxymethylaminomethyl modification enzyme MnmG (642 aa).

Residue 24–29 participates in FAD binding; it reads GGGHAG. 284–298 is an NAD(+) binding site; sequence GPRYCPSIEDKIHRF.

Belongs to the MnmG family. Homodimer. Heterotetramer of two MnmE and two MnmG subunits. FAD serves as cofactor.

The protein resides in the cytoplasm. Its function is as follows. NAD-binding protein involved in the addition of a carboxymethylaminomethyl (cmnm) group at the wobble position (U34) of certain tRNAs, forming tRNA-cmnm(5)s(2)U34. This chain is tRNA uridine 5-carboxymethylaminomethyl modification enzyme MnmG, found in Psychrobacter sp. (strain PRwf-1).